Reading from the N-terminus, the 331-residue chain is DNA-directed RNA polymerase subunit alpha (331 aa).

Positions 1-230 (MKNIKTSPYI…KQMSVFNSEW (230 aa)) are alpha N-terminal domain (alpha-NTD). An alpha C-terminal domain (alpha-CTD) region spans residues 247–331 (LKPLLQKIEA…ALQKRLNKLK (85 aa)).

The protein belongs to the RNA polymerase alpha chain family. In terms of assembly, homodimer. The RNAP catalytic core consists of 2 alpha, 1 beta/beta' and 1 omega subunit. When a sigma factor is associated with the core the holoenzyme is formed, which can initiate transcription.

The catalysed reaction is RNA(n) + a ribonucleoside 5'-triphosphate = RNA(n+1) + diphosphate. Its function is as follows. DNA-dependent RNA polymerase catalyzes the transcription of DNA into RNA using the four ribonucleoside triphosphates as substrates. This chain is DNA-directed RNA polymerase subunit alpha, found in Wolinella succinogenes (strain ATCC 29543 / DSM 1740 / CCUG 13145 / JCM 31913 / LMG 7466 / NCTC 11488 / FDC 602W) (Vibrio succinogenes).